The following is a 315-amino-acid chain: Methionyl-tRNA formyltransferase (315 aa).

113-116 contacts (6S)-5,6,7,8-tetrahydrofolate; sequence SLLP.

Belongs to the Fmt family.

The enzyme catalyses L-methionyl-tRNA(fMet) + (6R)-10-formyltetrahydrofolate = N-formyl-L-methionyl-tRNA(fMet) + (6S)-5,6,7,8-tetrahydrofolate + H(+). Functionally, attaches a formyl group to the free amino group of methionyl-tRNA(fMet). The formyl group appears to play a dual role in the initiator identity of N-formylmethionyl-tRNA by promoting its recognition by IF2 and preventing the misappropriation of this tRNA by the elongation apparatus. The chain is Methionyl-tRNA formyltransferase from Escherichia coli (strain SMS-3-5 / SECEC).